The sequence spans 211 residues: Protein N-terminal glutamine amidohydrolase (211 aa).

Residues Cys24, His78, and Asp94 contribute to the active site.

This sequence belongs to the NTAQ1 family. In terms of assembly, monomer.

The enzyme catalyses N-terminal L-glutaminyl-[protein] + H2O = N-terminal L-glutamyl-[protein] + NH4(+). In terms of biological role, mediates the side-chain deamidation of N-terminal glutamine residues to glutamate, an important step in N-end rule pathway of protein degradation. Conversion of the resulting N-terminal glutamine to glutamate renders the protein susceptible to arginylation, polyubiquitination and degradation as specified by the N-end rule. Does not act on substrates with internal or C-terminal glutamine and does not act on non-glutamine residues in any position. The sequence is that of Protein N-terminal glutamine amidohydrolase (tun) from Anopheles gambiae (African malaria mosquito).